Here is a 405-residue protein sequence, read N- to C-terminus: MSEKRRDNRGRILKTGESQRKDGRYLYKYIDSFGEPQFVYSWKLVATDRVPAGKRDCISLREKIAELQKDIHDGIDVVGKKMTLCQLYAKQNAQRPKVRKNTETGRKYLMDILKKDKLGVRSIDSIKPSDAKEWAIRMSENGYAYQTINNYKRSLKASFYIAIQDDCVRKNPFDFQLKAVLDDDTVPKTVLTEEQEEKLLAFAKADKTYSKNYDEILILLKTGLRISEFGGLTLPDLDFENRLVNIDHQLLRDTEIGYYIETPKTKSGERQVPMVEEAYQAFKRVLANRKNDKRVEIDGYSDFLFLNRKNYPKVASDYNGMMKGLVKKYNKYNEDKLPHITPHSLRHTFCTNYANAGMNPKALQYIMGHANIAMTLNYYAHATFDSAMAEMKRLNKEKQQERLVA.

The Core-binding (CB) domain occupies 79–163 (GKKMTLCQLY…SLKASFYIAI (85 aa)). The Tyr recombinase domain maps to 186–392 (VPKTVLTEEQ…TFDSAMAEMK (207 aa)). Active-site residues include Arg-225, Lys-264, His-343, Arg-346, and His-369. The active-site O-(3'-phospho-DNA)-tyrosine intermediate is the Tyr-379.

The protein belongs to the 'phage' integrase family.

This is Transposase from transposon Tn916 (Int-Tn) from Enterococcus faecalis (Streptococcus faecalis).